Consider the following 72-residue polypeptide: Conotoxin Ep11.1 (72 aa).

A signal peptide spans 1–19; that stretch reads MKLCVTFLLILVILPSVTG. A propeptide spanning residues 20-32 is cleaved from the precursor; the sequence is EKSSKRTLSGAAL. 4 disulfide bridges follow: C39-C53, C46-C58, C52-C63, and C57-C70.

The protein belongs to the conotoxin I1 superfamily. As to expression, expressed by the venom duct.

It is found in the secreted. This Conus episcopatus (Bishop's cone) protein is Conotoxin Ep11.1.